Consider the following 1194-residue polypeptide: MFSLDSFRKDRAQHRQRQCKLPPPRLPPMCVNPAPGGTISRASRDLLKEFPQPKNLLNSVIGRALGISHAKDKLVYVHTNGPKKKKVTLHIKWPKSVEVEGYGSKKIDAERQAAAAACQLFKGWGLLGPRNELFDAAKYRVLADRFGSPADSWWRPEPTMPPTSWRQLNPESIRPGGPGGLSRSLGREEEEDEEEELEEGTIDVTDFLSMTQQDSHTPLRDSRGSSFEMTDDDSAIRALTQFPLPKNLLAKVIQIATSSSTAKNLMQFHTVGTKTKLSTLTLLWPCPMTFVAKGRRKAEAENKAAALACKKLKSLGLVDRNNEPLTHAMYNLASLRELGETQRRPCTIQVPEPILRKIETFLNHYPVESSWIAPELRLQSDDILPLGKDSGPLSDPITGKPYVPLLEAEEVRLSQSLLELWRRRGPVWQEAPQLPVDPHRDTILNAIEQHPVVVISGDTGCGKTTRIPQLLLERYVTEGRGARCNVIITQPRRISAVSVAQRVSHELGPSLRRNVGFQVRLESKPPARGGALLFCTVGILLRKLQSNPSLEGVSHVIVDEVHERDVNTDFLLILLKGLQRLNPALRLVLMSATGDNERFSRYFGGCPVIKVPGFMYPVKEHYLEDILAKLGKHQYLHRHRHHESEDECALDLDLVTDLVLHIDARGEPGGILCFLPGWQEIKGVQQRLQEALGMHESKYLILPVHSNIPMMDQKAIFQQPPVGVRKIVLATNIAETSTTINDIVHVVDSGLHKEERYDLKTKVSCLETVWVSRANVIQRRGRAGRCQSGFAYHLFPRSRLEKMVPFQVPEILRTPLENLVLQAKIHMPEKTAVEFLSKAVDSPNIKAVDEAVILLQEIGVLDQREYLTTLGQRLAHISTEPRLAKAIVLAAIFRCLHPLLVVVSCLTRDPFSSSLQNRAEVDKVKALLSHDSGSDHLAFVRAVAGWEEVLRWQDRSSRENYLEENLLYAPSLRFIHGLIKQFSENIYEAFLVGKPSDCTLASAQCNEYSEEEELVKGVLMAGLYPNLIQVRQGKVTRQGKFKPNSVTYRTKSGNILLHKSTINREATRLRSRWLTYFMAVKSNGSVFVRDSSQVHPLAVLLLTDGDVHIRDDGRRATISLSDSDLLRLEGDSRTVRLLKELRRALGRMVERSLRSELAALPPSVQEEHGQLLALLAELLRGPCGSFDVRKTADD.

Basic and acidic residues predominate over residues 1–10; sequence MFSLDSFRKD. The interval 1-27 is disordered; it reads MFSLDSFRKDRAQHRQRQCKLPPPRLP. S6 is subject to Phosphoserine. In terms of domain architecture, DRBM spans 53 to 121; sequence PKNLLNSVIG…QAAAAACQLF (69 aa). Residues 150 to 199 are disordered; it reads ADSWWRPEPTMPPTSWRQLNPESIRPGGPGGLSRSLGREEEEDEEEELEE. Residues 188–199 are compositionally biased toward acidic residues; sequence EEEEDEEEELEE. 2 positions are modified to phosphoserine: S226 and S380. In terms of domain architecture, Helicase ATP-binding spans 444-612; that stretch reads LNAIEQHPVV…FGGCPVIKVP (169 aa). Residue 457-464 coordinates ATP; it reads GDTGCGKT. A DEAH box motif is present at residues 559–562; the sequence is DEVH. The 174-residue stretch at 654–827 folds into the Helicase C-terminal domain; sequence LVTDLVLHID…NLVLQAKIHM (174 aa).

The protein belongs to the DEAD box helicase family. DEAH subfamily. Identified in a complex with TFAM and SSBP1. Interacts (via N-terminus) with ZC3HAV1 (via N-terminal domain) in an RNA-independent manner. Found in a complex with GRSF1, DDX28, FASTKD2 and FASTKD5.

It is found in the cytoplasm. The protein localises to the mitochondrion. The protein resides in the mitochondrion matrix. It localises to the mitochondrion nucleoid. It carries out the reaction ATP + H2O = ADP + phosphate + H(+). Its function is as follows. RNA-dependent helicase. Plays an important role in the assembly of the mitochondrial large ribosomal subunit. Required for optimal function of the zinc-finger antiviral protein ZC3HAV1. Associates with mitochondrial DNA. Involved in nervous system development and differentiation through its involvement in the up-regulation of a number of genes which are required for neurogenesis, including GSC, NCAM1, neurogenin, and NEUROD. The protein is ATP-dependent RNA helicase DHX30 (DHX30) of Pongo abelii (Sumatran orangutan).